The chain runs to 169 residues: ALK and LTK ligand 2a (169 aa).

A signal peptide spans 1 to 25 (MRALRAPVLVMGLVLLICTAAQSDA). The tract at residues 45 to 68 (ENSADDESAQKTESAPEPKDTHHL) is disordered. Residues 52–67 (SAQKTESAPEPKDTHH) are compositionally biased toward basic and acidic residues. 2 disulfides stabilise this stretch: Cys-130–Cys-166 and Cys-144–Cys-153.

The protein belongs to the ALKAL family. Homodimer. Expressed at high level in the notochord and iridophore stripes of the trunk, as well as in the eye and swim bladder.

The protein resides in the secreted. The protein localises to the cell membrane. Cytokine that acts as a physiological ligand for receptor tyrosine kinases LTK and ALK. Required for neural crest cell differentiation and iridophore development during embryonic iridophore development and adult stripe development by acting as a receptor for LTK. The sequence is that of ALK and LTK ligand 2a from Danio rerio (Zebrafish).